The sequence spans 356 residues: Nuclear hormone receptor family member nhr-42 (356 aa).

The nuclear receptor DNA-binding region spans 7-82 (SQTCLICGDS…VGMRESAVLS (76 aa)). The NR C4-type zinc-finger motif lies at 10-30 (CLICGDSADSLHFGALSCRAC). The segment at 48 to 70 (CDRQCKVDTGMRKLCASCRYDKC) adopts an NR C4-type; atypical zinc-finger fold. One can recognise an NR LBD domain in the interval 108–356 (TSDSVLENLQ…HSSIFGNMAE (249 aa)).

Belongs to the nuclear hormone receptor family.

It is found in the nucleus. Orphan nuclear receptor. The sequence is that of Nuclear hormone receptor family member nhr-42 (nhr-42) from Caenorhabditis elegans.